The primary structure comprises 114 residues: Ribonuclease P protein component (114 aa).

It belongs to the RnpA family. In terms of assembly, consists of a catalytic RNA component (M1 or rnpB) and a protein subunit.

It catalyses the reaction Endonucleolytic cleavage of RNA, removing 5'-extranucleotides from tRNA precursor.. In terms of biological role, RNaseP catalyzes the removal of the 5'-leader sequence from pre-tRNA to produce the mature 5'-terminus. It can also cleave other RNA substrates such as 4.5S RNA. The protein component plays an auxiliary but essential role in vivo by binding to the 5'-leader sequence and broadening the substrate specificity of the ribozyme. The chain is Ribonuclease P protein component from Borrelia turicatae (strain 91E135).